Here is a 555-residue protein sequence, read N- to C-terminus: Phosphomethylpyrimidine synthase (555 aa).

The interval 78 to 104 (VRDRWGFDNGSAESTKGELSMSERKPR) is disordered. Residues Asn-191, Met-220, Tyr-249, His-285, 305-307 (SRG), 346-349 (DALR), and Glu-385 each bind substrate. His-389 provides a ligand contact to Zn(2+). Tyr-412 is a substrate binding site. Residue His-453 coordinates Zn(2+). The [4Fe-4S] cluster site is built by Cys-535, Cys-538, and Cys-543.

This sequence belongs to the ThiC family. Requires [4Fe-4S] cluster as cofactor.

It carries out the reaction 5-amino-1-(5-phospho-beta-D-ribosyl)imidazole + S-adenosyl-L-methionine = 4-amino-2-methyl-5-(phosphooxymethyl)pyrimidine + CO + 5'-deoxyadenosine + formate + L-methionine + 3 H(+). The protein operates within cofactor biosynthesis; thiamine diphosphate biosynthesis. Catalyzes the synthesis of the hydroxymethylpyrimidine phosphate (HMP-P) moiety of thiamine from aminoimidazole ribotide (AIR) in a radical S-adenosyl-L-methionine (SAM)-dependent reaction. The chain is Phosphomethylpyrimidine synthase from Chlorobaculum parvum (strain DSM 263 / NCIMB 8327) (Chlorobium vibrioforme subsp. thiosulfatophilum).